Consider the following 134-residue polypeptide: Interleukin-5 (134 aa).

The signal sequence occupies residues 1–19; the sequence is MRMLLHLSLLALGAAYVYA. The O-linked (GalNAc...) threonine glycan is linked to threonine 22. N-linked (GlcNAc...) asparagine glycosylation is found at asparagine 47 and asparagine 90.

Belongs to the IL-5 family. In terms of assembly, homodimer; disulfide-linked. Interacts with IL5RA. Interacts with CSF2RB.

It is found in the secreted. In terms of biological role, homodimeric cytokine expressed predominantly by T-lymphocytes and NK cells that plays an important role in the survival, differentiation, and chemotaxis of eosinophils. Also acts on activated and resting B-cells to induce immunoglobulin production, growth, and differentiation. Mechanistically, exerts its biological effects through a receptor composed of IL5RA subunit and the cytokine receptor common subunit beta/CSF2RB. Binding to the receptor leads to activation of various kinases including LYN, SYK and JAK2 and thereby propagates signals through the RAS-MAPK and JAK-STAT5 pathways respectively. This chain is Interleukin-5 (IL5), found in Macaca mulatta (Rhesus macaque).